A 93-amino-acid polypeptide reads, in one-letter code: Large ribosomal subunit protein uL23cz/uL23cy (93 aa).

Belongs to the universal ribosomal protein uL23 family. In terms of assembly, part of the 50S ribosomal subunit.

The protein resides in the plastid. The protein localises to the chloroplast. In terms of biological role, binds to 23S rRNA. This chain is Large ribosomal subunit protein uL23cz/uL23cy (rpl23-A), found in Phaseolus angularis (Azuki bean).